Reading from the N-terminus, the 2763-residue chain is Large tegument protein deneddylase (2763 aa).

Residues Met1 to Tyr247 form a deubiquitination activity region. Residues Ala12–Ser237 enclose the Peptidase C76 domain. Active-site residues include Cys32, Asp168, and His170. Residues Leu495–Ser523 are interaction with inner tegument protein. 8 consecutive repeat copies span residues Pro2455–Gln2457, Pro2458–Gln2460, Pro2461–Gln2463, Pro2464–Gln2466, Pro2467–Gln2469, Pro2470–Gln2472, Pro2473–Gln2475, and Pro2476–Gln2478. Positions Pro2455–Gln2478 are 8 X 3 AA repeats of P-A/V-Q. Residues Asn2630–Ser2651 are disordered.

This sequence belongs to the herpesviridae large tegument protein family. Interacts with host CUL1 and CUL4A; these interactions inhibit the E3 ligase activity of cullins. Interacts with inner tegument protein. Interacts with capsid vertex specific component CVC2. Interacts with the major capsid protein/MCP.

The protein localises to the virion tegument. The protein resides in the host cytoplasm. It is found in the host nucleus. It carries out the reaction Thiol-dependent hydrolysis of ester, thioester, amide, peptide and isopeptide bonds formed by the C-terminal Gly of ubiquitin (a 76-residue protein attached to proteins as an intracellular targeting signal).. Functionally, large tegument protein that plays multiple roles in the viral cycle. During viral entry, remains associated with the capsid while most of the tegument is detached and participates in the capsid transport toward the host nucleus. Plays a role in the routing of the capsid at the nuclear pore complex and subsequent uncoating. Within the host nucleus, acts as a deneddylase and promotes the degradation of nuclear CRLs (cullin-RING ubiquitin ligases) and thereby stabilizes nuclear CRL substrates, while cytoplasmic CRLs remain unaffected. These modifications prevent host cell cycle S-phase progression and create a favorable environment allowing efficient viral genome replication. Participates later in the secondary envelopment of capsids. Indeed, plays a linker role for the association of the outer viral tegument to the capsids together with the inner tegument protein. This is Large tegument protein deneddylase from Varicella-zoster virus (strain Oka vaccine) (HHV-3).